The sequence spans 137 residues: Immunoglobulin domain-containing protein oig-1 (137 aa).

The signal sequence occupies residues 1–23 (MFSELRILRDILLLCFLSVGINA). The 93-residue stretch at 41–133 (PKISRSSYFK…KGSRVKKFLT (93 aa)) folds into the Ig-like C2-type domain. C63 and C118 are disulfide-bonded.

As to expression, expressed in DD and VD GABAergic motor neurons. Expressed in a subset of head neurons including M2 motor neurons in the pharynx. Expressed in coelomocytes.

Its subcellular location is the membrane. It localises to the secreted. The protein resides in the extracellular space. The protein localises to the cell projection. It is found in the dendrite. Its subcellular location is the axon. Functionally, plays a role in neural development, where it temporally regulates synapse formation in the D-type inhibitory GABAergic motor neurons, dorsal D (DD) and ventral D (VD) motor neurons. Controls the translocation of postsynaptic proteins, such as the acetylcholine receptor subunit acr-12, and presynaptic proteins, such as snb-1, along nerve cords to prevent premature synapse remodeling/formation. This chain is Immunoglobulin domain-containing protein oig-1, found in Caenorhabditis elegans.